Reading from the N-terminus, the 186-residue chain is uncharacterized protein (186 aa).

Residues 156–186 (DTKELERTTQPPEHQKHHQEPREKRGMNKRD) form a disordered region. Residues 173 to 186 (HQEPREKRGMNKRD) show a composition bias toward basic and acidic residues.

This is an uncharacterized protein from Bacillus subtilis (strain 168).